We begin with the raw amino-acid sequence, 334 residues long: Putative peptide import ATP-binding protein BAB2_1053 (334 aa).

The ABC transporter domain occupies Val-22–Leu-272. Gly-64–Ser-71 is an ATP binding site.

It belongs to the ABC transporter superfamily. In terms of assembly, the complex is composed of two ATP-binding proteins (BAB2_1052 and BAB2_1053), two transmembrane proteins (BAB2_1050 and BAB2_1051) and a solute-binding protein (BAB2_1049).

The protein resides in the cell inner membrane. Functionally, probably part of an ABC transporter complex that could be involved in peptide import. Probably responsible for energy coupling to the transport system. The chain is Putative peptide import ATP-binding protein BAB2_1053 from Brucella abortus (strain 2308).